The chain runs to 132 residues: Small ribosomal subunit protein uS8 (132 aa).

Belongs to the universal ribosomal protein uS8 family. As to quaternary structure, part of the 30S ribosomal subunit. Contacts proteins S5 and S12.

Functionally, one of the primary rRNA binding proteins, it binds directly to 16S rRNA central domain where it helps coordinate assembly of the platform of the 30S subunit. In Brucella anthropi (strain ATCC 49188 / DSM 6882 / CCUG 24695 / JCM 21032 / LMG 3331 / NBRC 15819 / NCTC 12168 / Alc 37) (Ochrobactrum anthropi), this protein is Small ribosomal subunit protein uS8.